Here is a 202-residue protein sequence, read N- to C-terminus: Endothelin-1 (202 aa).

Residues 1–25 (MDYFPVIFSLLFVTFQGAPETAVLG) form the signal peptide. Positions 26–50 (AELSTGAENGVQSPPPSTPWRPRRS) are excised as a propeptide. Disulfide bonds link C53-C67 and C55-C63. Residues 74-202 (VNTPERVVPY…DQKLTHNRAH (129 aa)) constitute a propeptide that is removed on maturation. Residues 110–124 (CQCAHQKDKKCWNFC) form an endothelin-like region.

It belongs to the endothelin/sarafotoxin family. In terms of tissue distribution, highest expression in the adult is in lung. Lower levels found in heart, kidney, brain and intestine. In the embryo, expressed in outer and inner pharyngeal arch surfaces. Also expressed in endothelium of dorsal aorta and arch arteries, and in epithelium of pharyngeal pouches.

The protein localises to the secreted. Endothelins are endothelium-derived vasoconstrictor peptides. Probable ligand for G-protein coupled receptors EDNRA and EDNRB which activates PTK2B, BCAR1, BCAR3 and, GTPases RAP1 and RHOA cascade in glomerular mesangial cells. Also binds the DEAR/FBXW7-AS1 receptor. Promotes mesenteric arterial wall remodeling via activation of ROCK signaling and subsequent colocalization of NFATC3 with F-actin filaments. NFATC3 then translocates to the nucleus where it subsequently promotes the transcription of the smooth muscle hypertrophy and differentiation marker ACTA2. The chain is Endothelin-1 (Edn1) from Mus musculus (Mouse).